The sequence spans 489 residues: Rhamnulokinase (489 aa).

13-17 (ASSGR) provides a ligand contact to ATP. Residues C68 and C222 are joined by a disulfide bond. Substrate contacts are provided by residues G83 and 236–238 (HDT). The active-site Proton acceptor is D237. T259 lines the ATP pocket. N296 is a binding site for substrate. ATP is bound at residue Q304. A disulfide bridge links C353 with C370. G402 contributes to the ATP binding site. Cysteines 413 and 417 form a disulfide.

It belongs to the rhamnulokinase family. It depends on Mg(2+) as a cofactor.

It catalyses the reaction L-rhamnulose + ATP = L-rhamnulose 1-phosphate + ADP + H(+). Its pathway is carbohydrate degradation; L-rhamnose degradation; glycerone phosphate from L-rhamnose: step 2/3. Involved in the catabolism of L-rhamnose (6-deoxy-L-mannose). Catalyzes the transfer of the gamma-phosphate group from ATP to the 1-hydroxyl group of L-rhamnulose to yield L-rhamnulose 1-phosphate. This Salmonella schwarzengrund (strain CVM19633) protein is Rhamnulokinase.